Reading from the N-terminus, the 1696-residue chain is PH domain leucine-rich repeat protein phosphatase 1 (1696 aa).

Methionine 1 bears the N-acetylmethionine mark. Disordered regions lie at residues 1–97 (MEPA…GGGA) and 222–398 (LGHG…VVGE). The segment covering 79 to 92 (VPQPAAGGAAPVTA) has biased composition (low complexity). The segment covering 313–325 (DTESFSLSPSAES) has biased composition (polar residues). Residue serine 378 is modified to Phosphoserine. Residues 499–599 (RIQLSGMYNV…WLRQVSKVAS (101 aa)) enclose the PH domain. LRR repeat units follow at residues 601–622 (RISSVDLSCCSLEHLPANLFYS), 624–645 (DLTHLNLKQNFLRQNPSLPAAR), 655–676 (KLKSLNLSNNHLGAFPSAVCSI), 678–699 (TLAELNVSCNALQEVPAAVGAM), 701–722 (NLQTFLLDGNFLQSLPAELENM), 724–746 (QLSYLGLSFNEFTDIPEVLEKLT), 836–857 (FLKALYASSNELVQLDVYPVPN), 858–879 (YLSYMDVSRNCLESVPEWVCES), 881–902 (KLEVLDIGHNQICELPARLFCN), 904–925 (SLRKLLAGHNRLARLPERLERT), 926–947 (SVEVLDVQHNQIIELPPNLLMK), 950–971 (SLRFLNASANKLETLPPATLSE), 976–996 (ILQELYLTNNSLTDKCVPLLT), 1000–1021 (RLKILHMAYNRLQSFPASKMAK), 1024–1045 (ELEEIDISGNKLKAIPTTIMNC), 1047–1068 (RMHTVIAHSNCIEVFPEVMQLP), 1069–1090 (EVKCVDLSCNELSEITLPENLP), and 1092–1113 (KLQELDLTGNPRLALDHKSLEL). The PPM-type phosphatase domain occupies 1138-1385 (SHGYTEASGV…DSISAVVVQL (248 aa)). Residues aspartate 1173, glycine 1174, lysine 1337, and aspartate 1376 each coordinate Mn(2+). Disordered regions lie at residues 1422 to 1473 (RPSD…SPAY) and 1610 to 1696 (KPGG…DTPL). 3 stretches are compositionally biased toward low complexity: residues 1431 to 1452 (SSSSGMASEISSELSTSEMSSE), 1647 to 1660 (QQQQQQQQQQQQQQ), and 1670 to 1680 (QAQAQAQAQAQ). Positions 1694–1696 (TPL) match the PDZ-binding motif.

As to quaternary structure, interacts with the nucleotide free form of K-Ras (KRAS) via its LRR repeats. Interacts with AKT2, AKT3 and PRKCB isoform beta-II. Interacts with WDR48 and USP12. Mn(2+) is required as a cofactor. In terms of tissue distribution, mainly present in brain (at protein level). Isoform 2 is more abundant in adult brain neurons than isoform 1 in. Isoforms 1 and 2 are expressed in the retina but not found in rod outer segments.

It is found in the cytoplasm. Its subcellular location is the membrane. It localises to the cell membrane. The protein resides in the nucleus. The protein localises to the nucleoplasm. It is found in the nucleus membrane. The catalysed reaction is O-phospho-L-seryl-[protein] + H2O = L-seryl-[protein] + phosphate. It catalyses the reaction O-phospho-L-threonyl-[protein] + H2O = L-threonyl-[protein] + phosphate. Its activity is regulated as follows. Insensitive to okadaic acid. Deubiquitination by WDR48-USP12 complex positively regulates PHLPP1 stability. Its function is as follows. Protein phosphatase involved in regulation of Akt and PKC signaling. Mediates dephosphorylation in the C-terminal domain hydrophobic motif of members of the AGC Ser/Thr protein kinase family; specifically acts on 'Ser-473' of AKT2 and AKT3, 'Ser-660' of PRKCB and 'Ser-657' of PRKCA. Isoform 2 seems to have a major role in regulating Akt signaling in hippocampal neurons while isoform 1 may promote Akt and PKC activation and inhibit ERK signaling. Akt regulates the balance between cell survival and apoptosis through a cascade that primarily alters the function of transcription factors that regulate pro- and antiapoptotic genes. Dephosphorylation of 'Ser-473' of Akt triggers apoptosis and suppression of tumor growth. Dephosphorylation of PRKCA and PRKCB leads to their destabilization and degradation. Dephosphorylates STK4 on 'Thr-387' leading to STK4 activation and apoptosis. Dephosphorylates RPS6KB1 and is involved in regulation of cap-dependent translation. Inhibits cancer cell proliferation and may act as a tumor suppressor. Dephosphorylates RAF1 inhibiting its kinase activity. May act as a negative regulator of K-Ras signaling in membrane rafts. Involved in the hippocampus-dependent long-term memory formation. Involved in circadian control by regulating the consolidation of circadian periodicity after resetting. Involved in development and function of regulatory T-cells. This Rattus norvegicus (Rat) protein is PH domain leucine-rich repeat protein phosphatase 1 (Phlpp1).